The following is a 396-amino-acid chain: MAKEKFDRSKSHANIGTIGHVDHGKTTLTAAISTVLHKKSGKGTAMAYDQIDGAPEERERGITISTAHVEYETETRHYAHVDCPGHADYVKNMITGAAQMDGAILVVSAADGPMPQTREHILLSRNVGVPYIVVFLNKCDMVDDEELLELVEMEVRDLLSDYDFPGDDVPVIKGSALKALEGDADYEAKIFELMDAVDEYIPTPERDTEKPFMMPVEDVFSITGRGTVATGRVERGQVKVGDEVEIIGLQEENGKTTVTGVEMFRKLLDYAEAGDNIGALLRGVSREDIQRGQVLAKPGTITPHSRFKAEVYVLSKEEGGRHTPFFANYRPQFYFRTTDVTGIVHLPEGTEMVMPGDNTEMEVELISTIAIEEGTRFSIREGGRTVGSGVVSSIIK.

The region spanning 10-205 (KSHANIGTIG…AVDEYIPTPE (196 aa)) is the tr-type G domain. A G1 region spans residues 19–26 (GHVDHGKT). 19-26 (GHVDHGKT) lines the GTP pocket. Residue Thr-26 coordinates Mg(2+). A G2 region spans residues 61 to 65 (GITIS). The tract at residues 82 to 85 (DCPG) is G3. GTP is bound by residues 82 to 86 (DCPGH) and 137 to 140 (NKCD). Positions 137 to 140 (NKCD) are G4. Positions 175 to 177 (SAL) are G5.

It belongs to the TRAFAC class translation factor GTPase superfamily. Classic translation factor GTPase family. EF-Tu/EF-1A subfamily. As to quaternary structure, monomer.

It localises to the cytoplasm. The catalysed reaction is GTP + H2O = GDP + phosphate + H(+). Functionally, GTP hydrolase that promotes the GTP-dependent binding of aminoacyl-tRNA to the A-site of ribosomes during protein biosynthesis. This chain is Elongation factor Tu, found in Bacillus pumilus (strain SAFR-032).